Here is a 1056-residue protein sequence, read N- to C-terminus: Carbamoyl phosphate synthase large chain (1056 aa).

The interval 1–398 (MPRDPSIKKV…AFLKALRSLD (398 aa)) is carboxyphosphate synthetic domain. ATP contacts are provided by Arg-127, Arg-167, Gly-173, Gly-174, Glu-206, Val-208, Glu-213, Gly-239, Val-240, His-241, Gln-282, and Glu-295. An ATP-grasp 1 domain is found at 131-324 (RDLMNRIGEP…IARVASKIAI (194 aa)). The Mg(2+) site is built by Gln-282, Glu-295, and Asn-297. Gln-282, Glu-295, and Asn-297 together coordinate Mn(2+). Residues 399–532 (TDVEHHTVLS…STYGDKVCEV (134 aa)) are oligomerization domain. The tract at residues 533–921 (THSDRKKVMI…YKASIAAHNR (389 aa)) is carbamoyl phosphate synthetic domain. The ATP-grasp 2 domain maps to 663 to 854 (SVLLDSLSIP…LAKIAARVMM (192 aa)). Arg-699, Arg-738, Leu-740, Glu-745, Gly-770, Val-771, His-772, Ser-773, Gln-813, and Glu-825 together coordinate ATP. Mg(2+) contacts are provided by Gln-813, Glu-825, and Asn-827. 3 residues coordinate Mn(2+): Gln-813, Glu-825, and Asn-827. One can recognise an MGS-like domain in the interval 920–1056 (NRLPKSGNVF…IEPLQHYIGR (137 aa)). The segment at 922–1056 (LPKSGNVFIS…IEPLQHYIGR (135 aa)) is allosteric domain.

The protein belongs to the CarB family. Composed of two chains; the small (or glutamine) chain promotes the hydrolysis of glutamine to ammonia, which is used by the large (or ammonia) chain to synthesize carbamoyl phosphate. Tetramer of heterodimers (alpha,beta)4. It depends on Mg(2+) as a cofactor. The cofactor is Mn(2+).

It carries out the reaction hydrogencarbonate + L-glutamine + 2 ATP + H2O = carbamoyl phosphate + L-glutamate + 2 ADP + phosphate + 2 H(+). It catalyses the reaction hydrogencarbonate + NH4(+) + 2 ATP = carbamoyl phosphate + 2 ADP + phosphate + 2 H(+). The protein operates within amino-acid biosynthesis; L-arginine biosynthesis; carbamoyl phosphate from bicarbonate: step 1/1. Its pathway is pyrimidine metabolism; UMP biosynthesis via de novo pathway; (S)-dihydroorotate from bicarbonate: step 1/3. In terms of biological role, large subunit of the glutamine-dependent carbamoyl phosphate synthetase (CPSase). CPSase catalyzes the formation of carbamoyl phosphate from the ammonia moiety of glutamine, carbonate, and phosphate donated by ATP, constituting the first step of 2 biosynthetic pathways, one leading to arginine and/or urea and the other to pyrimidine nucleotides. The large subunit (synthetase) binds the substrates ammonia (free or transferred from glutamine from the small subunit), hydrogencarbonate and ATP and carries out an ATP-coupled ligase reaction, activating hydrogencarbonate by forming carboxy phosphate which reacts with ammonia to form carbamoyl phosphate. The polypeptide is Carbamoyl phosphate synthase large chain (Methanospirillum hungatei JF-1 (strain ATCC 27890 / DSM 864 / NBRC 100397 / JF-1)).